A 166-amino-acid chain; its full sequence is Ureidoglycolate lyase (166 aa).

Belongs to the ureidoglycolate lyase family. Homodimer. Requires Ni(2+) as cofactor.

It catalyses the reaction (S)-ureidoglycolate = urea + glyoxylate. Its pathway is nitrogen metabolism; (S)-allantoin degradation. Its function is as follows. Catalyzes the catabolism of the allantoin degradation intermediate (S)-ureidoglycolate, generating urea and glyoxylate. Involved in the utilization of allantoin as nitrogen source. The sequence is that of Ureidoglycolate lyase from Rhizobium etli (strain CIAT 652).